The following is a 1024-amino-acid chain: Beta-galactosidase (1024 aa).

Residues Asn-103 and Asp-202 each coordinate substrate. Asp-202 is a Na(+) binding site. Positions 417, 419, and 462 each coordinate Mg(2+). Residues Glu-462 and 538-541 each bind substrate; that span reads EYAH. Glu-462 serves as the catalytic Proton donor. Residue Glu-538 is the Nucleophile of the active site. Asn-598 is a binding site for Mg(2+). Phe-602 and Asn-605 together coordinate Na(+). Substrate-binding residues include Asn-605 and Trp-1000.

It belongs to the glycosyl hydrolase 2 family. In terms of assembly, homotetramer. Mg(2+) serves as cofactor. Requires Na(+) as cofactor.

It catalyses the reaction Hydrolysis of terminal non-reducing beta-D-galactose residues in beta-D-galactosides.. The protein is Beta-galactosidase of Escherichia coli O17:K52:H18 (strain UMN026 / ExPEC).